Reading from the N-terminus, the 249-residue chain is 2,3-bisphosphoglycerate-dependent phosphoglycerate mutase (249 aa).

Residues 8–15 (RHGESVWN), 21–22 (TG), R60, 87–90 (ERHY), K98, 114–115 (RR), and 183–184 (GN) each bind substrate. The Tele-phosphohistidine intermediate role is filled by H9. The active-site Proton donor/acceptor is the E87.

It belongs to the phosphoglycerate mutase family. BPG-dependent PGAM subfamily.

The enzyme catalyses (2R)-2-phosphoglycerate = (2R)-3-phosphoglycerate. It participates in carbohydrate degradation; glycolysis; pyruvate from D-glyceraldehyde 3-phosphate: step 3/5. In terms of biological role, catalyzes the interconversion of 2-phosphoglycerate and 3-phosphoglycerate. The polypeptide is 2,3-bisphosphoglycerate-dependent phosphoglycerate mutase (Chloroherpeton thalassium (strain ATCC 35110 / GB-78)).